The sequence spans 63 residues: SPbeta prophage-derived uncharacterized protein YotC (63 aa).

This chain is SPbeta prophage-derived uncharacterized protein YotC (yotC), found in Bacillus subtilis (strain 168).